Consider the following 539-residue polypeptide: Eukaryotic translation initiation factor 3 subunit L (539 aa).

One can recognise a PCI domain in the interval 302–514 (TFSSILLYIQ…IHIADTKVSH (213 aa)).

It belongs to the eIF-3 subunit L family. Component of the eukaryotic translation initiation factor 3 (eIF-3) complex.

The protein localises to the cytoplasm. In terms of biological role, component of the eukaryotic translation initiation factor 3 (eIF-3) complex, which is involved in protein synthesis of a specialized repertoire of mRNAs and, together with other initiation factors, stimulates binding of mRNA and methionyl-tRNAi to the 40S ribosome. The eIF-3 complex specifically targets and initiates translation of a subset of mRNAs involved in cell proliferation. The protein is Eukaryotic translation initiation factor 3 subunit L of Anopheles gambiae (African malaria mosquito).